The chain runs to 228 residues: Thrombin-like enzyme gyroxin analog (228 aa).

The Peptidase S1 domain occupies 1–222 (VIGGDECNIN…YLDWIQSVIA (222 aa)). 6 disulfide bridges follow: cysteine 7/cysteine 138, cysteine 28/cysteine 44, cysteine 78/cysteine 227, cysteine 117/cysteine 183, cysteine 149/cysteine 162, and cysteine 173/cysteine 198. Histidine 43 serves as the catalytic Charge relay system. Asparagine 45 and asparagine 81 each carry an N-linked (GlcNAc...) asparagine glycan. The active-site Charge relay system is aspartate 88. The N-linked (GlcNAc...) asparagine glycan is linked to asparagine 145. Residue serine 177 is the Charge relay system of the active site. N-linked (GlcNAc...) asparagine glycosylation is present at asparagine 224.

Belongs to the peptidase S1 family. Snake venom subfamily. As to quaternary structure, monomer. In terms of tissue distribution, expressed by the venom gland.

The protein resides in the secreted. It carries out the reaction Selective cleavage of Arg-|-Xaa bond in fibrinogen, to form fibrin, and release fibrinopeptide A. The specificity of further degradation of fibrinogen varies with species origin of the enzyme.. Inhibited competitively by amidines and guanidines, and irreversibly inhibited by diisopropylfluorophosphate. Thrombin-like snake venom serine protease, that cleaves alpha-chain of fibrinogen (FGA) releases only fibrinopeptide A. Shows coagulant, esterase and amidase activities. Induces the barrel rotation syndrome in mice, which is manifested by gyroxin-like, rapid rolling motions. May also reversibly increase the permeability of the blood brain barrier (BBB) in mice. The protein is Thrombin-like enzyme gyroxin analog of Lachesis muta muta (Bushmaster).